A 450-amino-acid chain; its full sequence is tRNA-2-methylthio-N(6)-dimethylallyladenosine synthase (450 aa).

One can recognise an MTTase N-terminal domain in the interval 14 to 132 (GEFFIETWGC…FPNYLNEVKK (119 aa)). 6 residues coordinate [4Fe-4S] cluster: Cys-23, Cys-59, Cys-93, Cys-169, Cys-173, and Cys-176. Residues 155 to 385 (RKNSMKAFVT…VEVVNEISAK (231 aa)) enclose the Radical SAM core domain. The region spanning 388–450 (KAYEGKIEEV…NSFSLTGEEI (63 aa)) is the TRAM domain.

The protein belongs to the methylthiotransferase family. MiaB subfamily. In terms of assembly, monomer. [4Fe-4S] cluster serves as cofactor.

The protein resides in the cytoplasm. The enzyme catalyses N(6)-dimethylallyladenosine(37) in tRNA + (sulfur carrier)-SH + AH2 + 2 S-adenosyl-L-methionine = 2-methylsulfanyl-N(6)-dimethylallyladenosine(37) in tRNA + (sulfur carrier)-H + 5'-deoxyadenosine + L-methionine + A + S-adenosyl-L-homocysteine + 2 H(+). Catalyzes the methylthiolation of N6-(dimethylallyl)adenosine (i(6)A), leading to the formation of 2-methylthio-N6-(dimethylallyl)adenosine (ms(2)i(6)A) at position 37 in tRNAs that read codons beginning with uridine. This Clostridium botulinum (strain Loch Maree / Type A3) protein is tRNA-2-methylthio-N(6)-dimethylallyladenosine synthase.